Here is a 514-residue protein sequence, read N- to C-terminus: ATP synthase subunit alpha (514 aa).

Residue 170–177 (GDRQIGKT) participates in ATP binding.

This sequence belongs to the ATPase alpha/beta chains family. F-type ATPases have 2 components, CF(1) - the catalytic core - and CF(0) - the membrane proton channel. CF(1) has five subunits: alpha(3), beta(3), gamma(1), delta(1), epsilon(1). CF(0) has three main subunits: a(1), b(2) and c(9-12). The alpha and beta chains form an alternating ring which encloses part of the gamma chain. CF(1) is attached to CF(0) by a central stalk formed by the gamma and epsilon chains, while a peripheral stalk is formed by the delta and b chains.

It localises to the cell inner membrane. The catalysed reaction is ATP + H2O + 4 H(+)(in) = ADP + phosphate + 5 H(+)(out). Its function is as follows. Produces ATP from ADP in the presence of a proton gradient across the membrane. The alpha chain is a regulatory subunit. The chain is ATP synthase subunit alpha from Pseudomonas fluorescens (strain SBW25).